A 637-amino-acid polypeptide reads, in one-letter code: Glutamate--cysteine ligase catalytic subunit (637 aa).

An N-acetylmethionine modification is found at Met1. 2 positions are modified to phosphoserine: Ser5 and Ser8.

The protein belongs to the glutamate--cysteine ligase type 3 family. In terms of assembly, heterodimer of a catalytic heavy chain and a regulatory light chain.

The catalysed reaction is L-cysteine + L-glutamate + ATP = gamma-L-glutamyl-L-cysteine + ADP + phosphate + H(+). The enzyme catalyses (2S)-2-aminobutanoate + L-glutamate + ATP = gamma-L-glutamyl-(2S)-2-aminobutanoate + ADP + phosphate + H(+). It functions in the pathway sulfur metabolism; glutathione biosynthesis; glutathione from L-cysteine and L-glutamate: step 1/2. With respect to regulation, feedback inhibition by glutathione. Catalyzes the ATP-dependent ligation of L-glutamate and L-cysteine and participates in the first and rate-limiting step in glutathione biosynthesis. In Mus musculus (Mouse), this protein is Glutamate--cysteine ligase catalytic subunit.